The primary structure comprises 256 residues: Phosphoribosylaminoimidazole-succinocarboxamide synthase (256 aa).

Positions 234-256 (KPQKPAAAKKKAPVSKKTVKRTR) are disordered. Over residues 240–256 (AAKKKAPVSKKTVKRTR) the composition is skewed to basic residues.

This sequence belongs to the SAICAR synthetase family.

The catalysed reaction is 5-amino-1-(5-phospho-D-ribosyl)imidazole-4-carboxylate + L-aspartate + ATP = (2S)-2-[5-amino-1-(5-phospho-beta-D-ribosyl)imidazole-4-carboxamido]succinate + ADP + phosphate + 2 H(+). Its pathway is purine metabolism; IMP biosynthesis via de novo pathway; 5-amino-1-(5-phospho-D-ribosyl)imidazole-4-carboxamide from 5-amino-1-(5-phospho-D-ribosyl)imidazole-4-carboxylate: step 1/2. This chain is Phosphoribosylaminoimidazole-succinocarboxamide synthase, found in Methanoregula boonei (strain DSM 21154 / JCM 14090 / 6A8).